We begin with the raw amino-acid sequence, 355 residues long: Cyclic nucleotide-gated potassium channel RHE_CH03180 (355 aa).

Over 1-12 (MSAVPFSKISTP) the chain is Cytoplasmic. Residues 13–30 (LNALFATIGLLVVAALTT) form a helical membrane-spanning segment. At 31-38 (QGLTGQER) the chain is on the periplasmic side. The chain crosses the membrane as a helical span at residues 39 to 61 (LVFELLLAAIWLAYVLQLSGTLL). Residues 62-73 (SRRRRLSGEMTA) lie on the Cytoplasmic side of the membrane. A helical transmembrane segment spans residues 74 to 93 (LVIDLLAVLVPAAAFLFVGS). The helical transmembrane segment at 94 to 111 (RDRDLYCAIWLLKPLRDS) threads the bilayer. The Cytoplasmic segment spans residues 112–128 (TFFRLLAKVVANESRNL). The chain crosses the membrane as a helical span at residues 129–149 (LGVTSVFGIVLFGAALAGYII). Residues 150–160 (ERDVQPDKFGS) are Periplasmic-facing. Positions 161 to 179 (IPQAMWWAVVTLSTTGYGD) form an intramembrane region, pore-forming. Positions 174 to 179 (TTGYGD) match the Selectivity filter motif. At 180-184 (EIPQS) the chain is on the periplasmic side. Residues 185–209 (LAGRVLAGLVMMSGIGIFALWAGIL) form a helical membrane-spanning segment. At 210–355 (ATGFYEEVRR…LERRGGPPKE (146 aa)) the chain is on the cytoplasmic side. 3',5'-cyclic AMP is bound by residues 297–298 (GE), 307–308 (RS), and R348.

This sequence belongs to the potassium channel family. Homotetramer.

The protein localises to the cell membrane. In terms of biological role, cyclic nucleotide-regulated potassium channel activated by cAMP. In Rhizobium etli (strain ATCC 51251 / DSM 11541 / JCM 21823 / NBRC 15573 / CFN 42), this protein is Cyclic nucleotide-gated potassium channel RHE_CH03180.